The primary structure comprises 413 residues: Glucose-1-phosphate adenylyltransferase (413 aa).

Residues Gly161, 176–177 (EK), and Ser195 each bind alpha-D-glucose 1-phosphate.

It belongs to the bacterial/plant glucose-1-phosphate adenylyltransferase family. Homotetramer.

It carries out the reaction alpha-D-glucose 1-phosphate + ATP + H(+) = ADP-alpha-D-glucose + diphosphate. The protein operates within glycan biosynthesis; glycogen biosynthesis. Functionally, involved in the biosynthesis of ADP-glucose, a building block required for the elongation reactions to produce glycogen. Catalyzes the reaction between ATP and alpha-D-glucose 1-phosphate (G1P) to produce pyrophosphate and ADP-Glc. This is Glucose-1-phosphate adenylyltransferase from Anaeromyxobacter dehalogenans (strain 2CP-C).